A 249-amino-acid chain; its full sequence is 2,3-bisphosphoglycerate-dependent phosphoglycerate mutase (249 aa).

Substrate-binding positions include 7–14, 20–21, Arg-59, 86–89, Lys-97, 113–114, and 182–183; these read RHGESEWN, TG, ERHY, RR, and GN. The active-site Tele-phosphohistidine intermediate is His-8. The active-site Proton donor/acceptor is Glu-86.

The protein belongs to the phosphoglycerate mutase family. BPG-dependent PGAM subfamily.

It carries out the reaction (2R)-2-phosphoglycerate = (2R)-3-phosphoglycerate. The protein operates within carbohydrate degradation; glycolysis; pyruvate from D-glyceraldehyde 3-phosphate: step 3/5. Its function is as follows. Catalyzes the interconversion of 2-phosphoglycerate and 3-phosphoglycerate. This is 2,3-bisphosphoglycerate-dependent phosphoglycerate mutase from Lachnoclostridium phytofermentans (strain ATCC 700394 / DSM 18823 / ISDg) (Clostridium phytofermentans).